Here is a 452-residue protein sequence, read N- to C-terminus: Tubulin alpha-6 chain (452 aa).

GTP-binding residues include glutamine 11, glutamate 69, serine 138, glycine 142, threonine 143, threonine 177, asparagine 204, and asparagine 226. Glutamate 69 provides a ligand contact to Mg(2+). Glutamate 252 is an active-site residue.

The protein belongs to the tubulin family. As to quaternary structure, dimer of alpha and beta chains. A typical microtubule is a hollow water-filled tube with an outer diameter of 25 nm and an inner diameter of 15 nM. Alpha-beta heterodimers associate head-to-tail to form protofilaments running lengthwise along the microtubule wall with the beta-tubulin subunit facing the microtubule plus end conferring a structural polarity. Microtubules usually have 13 protofilaments but different protofilament numbers can be found in some organisms and specialized cells. Mg(2+) is required as a cofactor.

It localises to the cytoplasm. The protein localises to the cytoskeleton. It is found in the spindle. The catalysed reaction is GTP + H2O = GDP + phosphate + H(+). In terms of biological role, tubulin is the major constituent of microtubules, a cylinder consisting of laterally associated linear protofilaments composed of alpha- and beta-tubulin heterodimers. Microtubules grow by the addition of GTP-tubulin dimers to the microtubule end, where a stabilizing cap forms. Below the cap, tubulin dimers are in GDP-bound state, owing to GTPase activity of alpha-tubulin. The polypeptide is Tubulin alpha-6 chain (TUBA6) (Naegleria pringsheimi (Amoeba)).